Here is a 441-residue protein sequence, read N- to C-terminus: Eukaryotic translation initiation factor 3 subunit M (441 aa).

The 170-residue stretch at Glu196–Tyr365 folds into the PCI domain. Residues Lys405 to Ser418 show a composition bias toward basic and acidic residues. The tract at residues Lys405–Glu441 is disordered.

This sequence belongs to the eIF-3 subunit M family. Component of the eukaryotic translation initiation factor 3 (eIF-3) complex.

It is found in the cytoplasm. Functionally, component of the eukaryotic translation initiation factor 3 (eIF-3) complex, which is involved in protein synthesis of a specialized repertoire of mRNAs and, together with other initiation factors, stimulates binding of mRNA and methionyl-tRNAi to the 40S ribosome. The eIF-3 complex specifically targets and initiates translation of a subset of mRNAs involved in cell proliferation. This Phaeosphaeria nodorum (strain SN15 / ATCC MYA-4574 / FGSC 10173) (Glume blotch fungus) protein is Eukaryotic translation initiation factor 3 subunit M.